We begin with the raw amino-acid sequence, 395 residues long: Fractalkine (395 aa).

A signal peptide spans 1 to 24 (MAPSPLAWLLRLAAFFHLCTLLPG). The tract at residues 25–100 (QHLGMTKCEI…HQAAALTKNG (76 aa)) is chemokine and involved in interaction with ITGAV:ITGB3 and ITGA4:ITGB1. Topologically, residues 25-336 (QHLGMTKCEI…TPVPDTQAAT (312 aa)) are extracellular. Cystine bridges form between C32–C58 and C36–C74. The segment at 101-336 (GKFEKRVDNV…TPVPDTQAAT (236 aa)) is mucin-like stalk. Polar residues-rich tracts occupy residues 148–172 (ARGT…TSEA) and 201–210 (AVYQSGSSSW). Disordered stretches follow at residues 148–180 (ARGT…LTAK) and 201–305 (AVYQ…SGSQ). The span at 218 to 236 (SPSTTAPSPQVSTTSPSTP) shows a compositional bias: low complexity. A helical membrane pass occupies residues 337-357 (RRQAVGLLAFLGLLFCLGVAM). At 358 to 395 (FAYQSLQGCPRKMAGEMVEGLRYVPRSCGSNSYVLVPV) the chain is on the cytoplasmic side.

The protein belongs to the intercrine delta family. As to quaternary structure, monomer. Forms a ternary complex with CX3CR1 and ITGAV:ITGB3 or ITGA4:ITGB1. In terms of processing, a soluble short 80 kDa form may be released by proteolytic cleavage from the long membrane-anchored form. As to expression, highest levels in brain. Lower levels in kidney, heart and lung. Also found in skeletal muscle and testis. Highly expressed in lesional smooth muscle cells, but not macrophages. Low levels of ABCD-3 mRNA were also found in anti-CD40-stimulated splenic B-cells, but not in resting B-cells. Also expressed in dendritic cells.

The protein resides in the cell membrane. It localises to the secreted. In terms of biological role, chemokine that acts as a ligand for both CX3CR1 and integrins ITGAV:ITGB3 and ITGA4:ITGB1. The CX3CR1-CX3CL1 signaling exerts distinct functions in different tissue compartments, such as immune response, inflammation, cell adhesion and chemotaxis. Regulates leukocyte adhesion and migration processes at the endothelium. Can activate integrins in both a CX3CR1-dependent and CX3CR1-independent manner. In the presence of CX3CR1, activates integrins by binding to the classical ligand-binding site (site 1) in integrins. In the absence of CX3CR1, binds to a second site (site 2) in integrins which is distinct from site 1 and enhances the binding of other integrin ligands to site 1. Functionally, the soluble form is chemotactic for T-cells and monocytes, but not for neutrophils. The membrane-bound form promotes adhesion of those leukocytes to endothelial cells. The sequence is that of Fractalkine from Mus musculus (Mouse).